The following is an 84-amino-acid chain: Acyl carrier protein homolog (84 aa).

The Carrier domain maps to 4 to 79 (HEILLKIKEI…DLVLEVKNLL (76 aa)). At S39 the chain carries O-(pantetheine 4'-phosphoryl)serine.

4'-phosphopantetheine is transferred from CoA to a specific serine of the apo-ACP-like protein.

It participates in lipid metabolism; fatty acid biosynthesis. Carrier of the growing fatty acid chain in fatty acid biosynthesis. In Mycoplasma genitalium (strain ATCC 33530 / DSM 19775 / NCTC 10195 / G37) (Mycoplasmoides genitalium), this protein is Acyl carrier protein homolog.